Reading from the N-terminus, the 264-residue chain is Diphthine synthase (264 aa).

S-adenosyl-L-methionine-binding positions include leucine 9, aspartate 84, valine 87, 112–113 (SI), leucine 164, alanine 207, and histidine 232.

This sequence belongs to the diphthine synthase family. As to quaternary structure, homodimer.

The enzyme catalyses 2-[(3S)-amino-3-carboxypropyl]-L-histidyl-[translation elongation factor 2] + 3 S-adenosyl-L-methionine = diphthine-[translation elongation factor 2] + 3 S-adenosyl-L-homocysteine + 3 H(+). It participates in protein modification; peptidyl-diphthamide biosynthesis. Its function is as follows. S-adenosyl-L-methionine-dependent methyltransferase that catalyzes the trimethylation of the amino group of the modified target histidine residue in translation elongation factor 2 (EF-2), to form an intermediate called diphthine. The three successive methylation reactions represent the second step of diphthamide biosynthesis. This is Diphthine synthase from Methanothermobacter thermautotrophicus (strain ATCC 29096 / DSM 1053 / JCM 10044 / NBRC 100330 / Delta H) (Methanobacterium thermoautotrophicum).